A 150-amino-acid chain; its full sequence is uncharacterized protein (150 aa).

4 helical membrane-spanning segments follow: residues 12 to 30 (IVQR…YFLF), 40 to 62 (RLLS…LVLF), 74 to 96 (IRRT…VLSG), and 106 to 128 (ALID…SRAV).

It localises to the cell membrane. This is an uncharacterized protein from Archaeoglobus fulgidus (strain ATCC 49558 / DSM 4304 / JCM 9628 / NBRC 100126 / VC-16).